The following is a 446-amino-acid chain: Histidine--tRNA ligase (446 aa).

It belongs to the class-II aminoacyl-tRNA synthetase family. Homodimer.

The protein localises to the cytoplasm. It carries out the reaction tRNA(His) + L-histidine + ATP = L-histidyl-tRNA(His) + AMP + diphosphate + H(+). The sequence is that of Histidine--tRNA ligase from Paraburkholderia phytofirmans (strain DSM 17436 / LMG 22146 / PsJN) (Burkholderia phytofirmans).